Reading from the N-terminus, the 154-residue chain is Transcriptional repressor NrdR (154 aa).

Residues 3–34 (CPFCGHSNTQVLDTRMSEDGDAVRRRRRCEAC) fold into a zinc finger. An ATP-cone domain is found at 49–139 (PAIVKKNGSR…VYRSFEDVAE (91 aa)).

Belongs to the NrdR family. Zn(2+) is required as a cofactor.

Functionally, negatively regulates transcription of bacterial ribonucleotide reductase nrd genes and operons by binding to NrdR-boxes. In Cupriavidus pinatubonensis (strain JMP 134 / LMG 1197) (Cupriavidus necator (strain JMP 134)), this protein is Transcriptional repressor NrdR.